The following is a 456-amino-acid chain: Multidrug resistance protein NorM (456 aa).

Helical transmembrane passes span 11–31, 53–73, 92–112, 126–146, 159–179, 189–209, 242–262, 268–288, 314–334, 356–376, 385–405, and 417–437; these read LIKL…MGFV, IWLP…PVVA, VVLA…TQFI, TVGY…FQTL, AMVI…IFVY, GVGC…LLLA, FPVA…ALLV, IIVA…MLPM, SRVG…ITVL, LLLF…AAGA, AIFN…GYIL, and AQGF…MLGV.

It belongs to the multi antimicrobial extrusion (MATE) (TC 2.A.66.1) family.

It localises to the cell inner membrane. Its function is as follows. Multidrug efflux pump that functions as a Na(+)/drug antiporter. Confers resistance to several drugs, such as norfloxacin, ciprofloxacin, ethidium, kanamycin and streptomycin. The sequence is that of Multidrug resistance protein NorM (norM) from Vibrio parahaemolyticus serotype O3:K6 (strain RIMD 2210633).